Here is a 447-residue protein sequence, read N- to C-terminus: MESAITISNHVNLAFSLSRNPSLSTKNSAGISCIKWQRPCLRNLGHVRLNQQRKGTRRKSTLVQAVAVPVAQPSAFPPTDNTEHLKQLAERYGFQQIGEPLPDDVTMRDIITSLPKQVFEINDTKAWGTVLISVTSYALGIFMIAKAPWYLLPLAWAWTGTAITGFFVIGHDCAHKSFSKNKLVEDIVGTLAFMPLIYPYEPWRFKHDQHHTKTNMLREDTAWLPIMKEDIESSPGLRKALIYAYGPLRTWMSIAHWLKVHFNLKDFRQSEVKRATISLAAVFAFMVIGWPLIIYKTGIVGWIKFWLMPWLGYHFWMSTFTIVHHTAPHIPFKSSKEWNAAQAQLSGTVHCDYPRWIEILCHDISVHIPHHISPKIPSYNLRAANQSLNENWGEYLNKPKSNWRLMRTIMTTCHIYDKDGNYVSFEKAVPEESQPISIPKRVMPDYA.

A chloroplast-targeting transit peptide spans 1 to 65 (MESAITISNH…TRRKSTLVQA (65 aa)). At V66 the chain carries N-acetylvaline. The Histidine box-1 signature appears at 171 to 175 (HDCAH). The Histidine box-2 signature appears at 207-211 (HDQHH). Positions 367–371 (HIPHH) match the Histidine box-3 motif.

This sequence belongs to the fatty acid desaturase type 1 family.

The protein localises to the plastid. It localises to the chloroplast membrane. It catalyses the reaction a (9Z)-octadecenoyl-containing glycerolipid + 2 reduced [2Fe-2S]-[ferredoxin] + O2 + 2 H(+) = a (9Z,12Z)-octadecadienoyl-containing glycerolipid + 2 oxidized [2Fe-2S]-[ferredoxin] + 2 H2O. It functions in the pathway lipid metabolism; polyunsaturated fatty acid biosynthesis. Chloroplast omega-6 fatty acid desaturase introduces the second double bond in the biosynthesis of 16:3 and 18:3 fatty acids, important constituents of plant membranes. It is thought to use ferredoxin as an electron donor and to act on fatty acids esterified to galactolipids, sulfolipids and phosphatidylglycerol. The chain is Omega-6 fatty acid desaturase, chloroplastic from Spinacia oleracea (Spinach).